We begin with the raw amino-acid sequence, 496 residues long: Glutamyl-tRNA(Gln) amidotransferase subunit A (496 aa).

Catalysis depends on charge relay system residues Lys-75 and Ser-150. Ser-174 functions as the Acyl-ester intermediate in the catalytic mechanism.

It belongs to the amidase family. GatA subfamily. As to quaternary structure, heterotrimer of A, B and C subunits.

The catalysed reaction is L-glutamyl-tRNA(Gln) + L-glutamine + ATP + H2O = L-glutaminyl-tRNA(Gln) + L-glutamate + ADP + phosphate + H(+). Allows the formation of correctly charged Gln-tRNA(Gln) through the transamidation of misacylated Glu-tRNA(Gln) in organisms which lack glutaminyl-tRNA synthetase. The reaction takes place in the presence of glutamine and ATP through an activated gamma-phospho-Glu-tRNA(Gln). In Burkholderia cenocepacia (strain HI2424), this protein is Glutamyl-tRNA(Gln) amidotransferase subunit A.